Consider the following 88-residue polypeptide: Alpha-latrotoxin associated low molecular weight protein 2 (88 aa).

Residues 1–19 form the signal peptide; that stretch reads MLKLICIAFLVTVLTLVAG. Disulfide bonds link C30-C66, C46-C62, and C49-C75.

This sequence belongs to the arthropod CHH/MIH/GIH/VIH hormone family. Expressed by the venom gland.

The protein localises to the secreted. Functionally, may increase the toxicity of alpha-latrotoxin and/or other venom components. Is non-toxic to mice and to the cockroach Periplaneta americana. The chain is Alpha-latrotoxin associated low molecular weight protein 2 from Latrodectus hesperus (Western black widow spider).